A 98-amino-acid chain; its full sequence is UPF0235 protein Ping_3043 (98 aa).

It belongs to the UPF0235 family.

This chain is UPF0235 protein Ping_3043, found in Psychromonas ingrahamii (strain DSM 17664 / CCUG 51855 / 37).